The sequence spans 79 residues: Sulfur carrier protein TusA (79 aa).

Cys17 acts as the Cysteine persulfide intermediate in catalysis.

It belongs to the sulfur carrier protein TusA family.

The protein resides in the cytoplasm. Sulfur carrier protein which probably makes part of a sulfur-relay system. The chain is Sulfur carrier protein TusA from Actinobacillus pleuropneumoniae serotype 7 (strain AP76).